The following is a 311-amino-acid chain: HPr kinase/phosphorylase (311 aa).

Active-site residues include His138 and Lys159. ATP is bound at residue 153–160 (GKSGVGKS). Ser160 is a binding site for Mg(2+). Residue Asp177 is the Proton acceptor; for phosphorylation activity. Proton donor; for dephosphorylation activity of the active site. Positions 201–210 (LEIRGLGIIN) are important for the catalytic mechanism of both phosphorylation and dephosphorylation. Glu202 lines the Mg(2+) pocket. Arg243 is an active-site residue. The important for the catalytic mechanism of dephosphorylation stretch occupies residues 264–269 (PVRPGR).

Belongs to the HPrK/P family. Homohexamer. Requires Mg(2+) as cofactor.

The catalysed reaction is [HPr protein]-L-serine + ATP = [HPr protein]-O-phospho-L-serine + ADP + H(+). It carries out the reaction [HPr protein]-O-phospho-L-serine + phosphate + H(+) = [HPr protein]-L-serine + diphosphate. In terms of biological role, catalyzes the ATP- as well as the pyrophosphate-dependent phosphorylation of a specific serine residue in HPr, a phosphocarrier protein of the phosphoenolpyruvate-dependent sugar phosphotransferase system (PTS). HprK/P also catalyzes the pyrophosphate-producing, inorganic phosphate-dependent dephosphorylation (phosphorolysis) of seryl-phosphorylated HPr (P-Ser-HPr). The two antagonistic activities of HprK/P are regulated by several intracellular metabolites, which change their concentration in response to the absence or presence of rapidly metabolisable carbon sources (glucose, fructose, etc.) in the growth medium. Also phosphorylates/dephosphorylates the HPr-like catabolite repression protein crh on a specific serine residue. Therefore, by controlling the phosphorylation state of HPr and crh, HPrK/P is a sensor enzyme that plays a major role in the regulation of carbon metabolism and sugar transport: it mediates carbon catabolite repression (CCR), and regulates PTS-catalyzed carbohydrate uptake and inducer exclusion. This is HPr kinase/phosphorylase from Geobacillus kaustophilus (strain HTA426).